Reading from the N-terminus, the 356-residue chain is MGGVLSLLFNISEIAAELSLSTGFTVDAILTGEAFAAVSTEAAWLIEIEAVDLAGLSTLEALSLTGLTTEQFSLLSAIPTALNNAIGIGVFFQTVSGASAVVAAGVTTFGYSKEVPVVNMALVPWFPQVDYLFPGFTSFSYYLNAVLDWGESLFHAVGREVWRHLMRQATLQIGQATRAVAVRSTNELSHTLAQIAENARWALTSGPVHIYSSVQDYYRYLPARNPIQLRQEYRNRGEPPPSRADFEYQENREGQRARRELGYDEPRSGQYVEHYTAPGGAHQRVTQDWMLPLILGLYGDITPTWEVELNKLEKEEDGPSKKKARRSMQKNMPYSRSRPQAPSKRRSRGARSKNRA.

Glycine 2 carries the N-myristoyl glycine; by host lipid modification. The interval 233 to 267 (YRNRGEPPPSRADFEYQENREGQRARRELGYDEPR) is disordered. Residues 244-267 (ADFEYQENREGQRARRELGYDEPR) show a composition bias toward basic and acidic residues. The interval 268-303 (SGQYVEHYTAPGGAHQRVTQDWMLPLILGLYGDITP) is D1. Residues 289-309 (WMLPLILGLYGDITPTWEVEL) traverse the membrane as a helical segment. The tract at residues 308–354 (ELNKLEKEEDGPSKKKARRSMQKNMPYSRSRPQAPSKRRSRGARSKN) is DNA-binding. Residues 312-356 (LEKEEDGPSKKKARRSMQKNMPYSRSRPQAPSKRRSRGARSKNRA) are disordered. Positions 320 to 326 (SKKKARR) match the Nuclear localization signal motif. The segment covering 329–340 (QKNMPYSRSRPQ) has biased composition (polar residues). The segment covering 343 to 356 (SKRRSRGARSKNRA) has biased composition (basic residues).

Belongs to the polyomaviruses capsid protein VP2 family. In terms of assembly, forms homooligomers, and heterooligomers with VP3 in the endoplasmic reticulum membrane. Interacts (via D1 domain) with VP1. As to quaternary structure, interacts (via D1 domain) with VP1.

The protein localises to the virion. It localises to the host nucleus. Its subcellular location is the host endoplasmic reticulum. The protein resides in the host endoplasmic reticulum membrane. Structural protein that resides within the core of the capsid surrounded by 72 VP1 pentamers. Participates in host cell receptor binding together with VP1. Following virus endocytosis and trafficking to the endoplasmic reticulum, VP2 and VP3 form oligomers and integrate into the endoplasmic reticulum membrane. Heterooligomer VP2-VP3 may create a viroporin for transporting the viral genome across the endoplasmic reticulum membrane to the cytoplasm. Nuclear entry of the viral DNA involves the selective exposure and importin recognition of VP2 or VP3 nuclear localization signal (shared C-terminus). Plays a role in virion assembly within the nucleus in particular through a DNA-binding domain located in the C-terminal region. An N-terminal myristoylation suggests a scaffold function for virion assembly. The viral progenies exit the cells by lytic release. In terms of biological role, structural protein that resides within the core of the capsid surrounded by 72 VP1 pentamers. Following virus endocytosis and trafficking to the endoplasmic reticulum, VP2 and VP3 form oligomers and integrate into the endoplasmic reticulum membrane. Heterooligomer VP2-VP3 may create a viroporin for transporting the viral genome across the endoplasmic reticulum membrane to the cytoplasm. Nuclear entry of the viral DNA involves the selective exposure and importin recognition of VP2 or VP3 nuclear localization signal (shared C-terminus). Plays a role in virion assembly within the nucleus. The sequence is that of Minor capsid protein VP2 from B-lymphotropic polyomavirus (LPV).